The following is a 413-amino-acid chain: S-adenosylmethionine synthase (413 aa).

Histidine 15 provides a ligand contact to ATP. Residue aspartate 17 participates in Mg(2+) binding. Glutamate 43 lines the K(+) pocket. The L-methionine site is built by glutamate 56 and glutamine 100. Positions 100-110 are flexible loop; that stretch reads QSPDISQGVND. Residues 171 to 173, 248 to 249, aspartate 257, 263 to 264, alanine 280, and lysine 284 each bind ATP; these read DGK, KF, and RK. Aspartate 257 lines the L-methionine pocket. Position 288 (lysine 288) interacts with L-methionine.

It belongs to the AdoMet synthase family. In terms of assembly, homotetramer; dimer of dimers. Mg(2+) is required as a cofactor. The cofactor is K(+).

The protein localises to the cytoplasm. It catalyses the reaction L-methionine + ATP + H2O = S-adenosyl-L-methionine + phosphate + diphosphate. Its pathway is amino-acid biosynthesis; S-adenosyl-L-methionine biosynthesis; S-adenosyl-L-methionine from L-methionine: step 1/1. In terms of biological role, catalyzes the formation of S-adenosylmethionine (AdoMet) from methionine and ATP. The overall synthetic reaction is composed of two sequential steps, AdoMet formation and the subsequent tripolyphosphate hydrolysis which occurs prior to release of AdoMet from the enzyme. This Prochlorococcus marinus (strain MIT 9301) protein is S-adenosylmethionine synthase.